Consider the following 481-residue polypeptide: Molybdate-anion transporter (481 aa).

Transmembrane regions (helical) follow at residues methionine 1–isoleucine 21, leucine 47–tyrosine 67, isoleucine 80–tryptophan 100, phenylalanine 131–phenylalanine 151, tryptophan 180–glycine 200, leucine 201–valine 221, valine 276–leucine 296, proline 306–phenylalanine 326, leucine 341–valine 361, leucine 371–leucine 391, alanine 403–leucine 423, and phenylalanine 443–valine 463.

It belongs to the major facilitator superfamily.

The protein localises to the cell membrane. Its function is as follows. Mediates high-affinity intracellular uptake of the rare oligo-element molybdenum. In Danio rerio (Zebrafish), this protein is Molybdate-anion transporter (mfsd5).